A 120-amino-acid polypeptide reads, in one-letter code: Immunoglobulin kappa variable 2-29 (120 aa).

A signal peptide spans 1 to 20 (MRLPAQLLGLLMLWIPGSSA). The tract at residues 21–43 (DIVMTQTPLSLSVTPGQPASISC) is framework-1. In terms of domain architecture, Ig-like spans 21–120 (DIVMTQTPLS…YYCMQGIHLP (100 aa)). C43 and C113 are oxidised to a cystine. The interval 44–59 (KSSQSLLHSDGKTYLY) is complementarity-determining-1. Residues 60–74 (WYLQKPGQSPQLLIY) form a framework-2 region. The complementarity-determining-2 stretch occupies residues 75–81 (EVSSRFS). The tract at residues 82–113 (GVPDRFSGSGSGTDFTLKISRVEAEDVGVYYC) is framework-3. Residues 114 to 120 (MQGIHLP) form a complementarity-determining-3 region.

In terms of assembly, immunoglobulins are composed of two identical heavy chains and two identical light chains; disulfide-linked.

The protein localises to the secreted. Its subcellular location is the cell membrane. Functionally, v region of the variable domain of immunoglobulin light chains that participates in the antigen recognition. Immunoglobulins, also known as antibodies, are membrane-bound or secreted glycoproteins produced by B lymphocytes. In the recognition phase of humoral immunity, the membrane-bound immunoglobulins serve as receptors which, upon binding of a specific antigen, trigger the clonal expansion and differentiation of B lymphocytes into immunoglobulins-secreting plasma cells. Secreted immunoglobulins mediate the effector phase of humoral immunity, which results in the elimination of bound antigens. The antigen binding site is formed by the variable domain of one heavy chain, together with that of its associated light chain. Thus, each immunoglobulin has two antigen binding sites with remarkable affinity for a particular antigen. The variable domains are assembled by a process called V-(D)-J rearrangement and can then be subjected to somatic hypermutations which, after exposure to antigen and selection, allow affinity maturation for a particular antigen. The chain is Immunoglobulin kappa variable 2-29 from Homo sapiens (Human).